The sequence spans 727 residues: Glucans biosynthesis glucosyltransferase H (727 aa).

The tract at residues 18–45 is disordered; sequence SAMPNERPGAMEPQSLTEMPEGFPRRST. 7 helical membrane-spanning segments follow: residues 58–78, 90–110, 278–298, 408–428, 460–480, 496–516, and 572–592; these read FFVVGGALLLSSFAIYEMGAV, LVLLLFAINFCWIALAFCSGI, LQQFAARIYGPVIGTGLGWWV, IMAYLSSPFWLLLILTGLMLA, LFYITMGVLFGPKIFGVLLLL, IFSVLFEVVLSALIAPIMMFI, and LLAWMSPALIGLWFAVPISAW.

This sequence belongs to the glycosyltransferase 2 family. OpgH subfamily.

The protein localises to the cell inner membrane. Its pathway is glycan metabolism; osmoregulated periplasmic glucan (OPG) biosynthesis. Involved in the biosynthesis of osmoregulated periplasmic glucans (OPGs). This is Glucans biosynthesis glucosyltransferase H from Shewanella putrefaciens (strain CN-32 / ATCC BAA-453).